A 1242-amino-acid polypeptide reads, in one-letter code: ATP-dependent helicase/nuclease subunit A (1242 aa).

The UvrD-like helicase ATP-binding domain maps to 12–487; that stretch reads SRWTDEQWKA…IDLASNFRSR (476 aa). 33 to 40 lines the ATP pocket; it reads AAAGSGKT. A UvrD-like helicase C-terminal domain is found at 514-808; it reads AAQLKYGADY…RVMTIHSSKG (295 aa).

It belongs to the helicase family. AddA subfamily. In terms of assembly, heterodimer of AddA and AddB/RexB. It depends on Mg(2+) as a cofactor.

The enzyme catalyses Couples ATP hydrolysis with the unwinding of duplex DNA by translocating in the 3'-5' direction.. It catalyses the reaction ATP + H2O = ADP + phosphate + H(+). The heterodimer acts as both an ATP-dependent DNA helicase and an ATP-dependent, dual-direction single-stranded exonuclease. Recognizes the chi site generating a DNA molecule suitable for the initiation of homologous recombination. The AddA nuclease domain is required for chi fragment generation; this subunit has the helicase and 3' -&gt; 5' nuclease activities. This chain is ATP-dependent helicase/nuclease subunit A, found in Geobacillus thermodenitrificans (strain NG80-2).